Reading from the N-terminus, the 60-residue chain is Short neurotoxin C (60 aa).

4 disulfide bridges follow: Cys3-Cys22, Cys17-Cys39, Cys41-Cys52, and Cys53-Cys58.

It belongs to the three-finger toxin family. Short-chain subfamily. Type I alpha-neurotoxin sub-subfamily. In terms of tissue distribution, expressed by the venom gland.

The protein resides in the secreted. In terms of biological role, binds to muscle nicotinic acetylcholine receptor (nAChR) and inhibit acetylcholine from binding to the receptor, thereby impairing neuromuscular transmission. This chain is Short neurotoxin C, found in Aipysurus laevis (Olive sea snake).